Consider the following 269-residue polypeptide: 3-methyl-2-oxobutanoate hydroxymethyltransferase (269 aa).

The Mg(2+) site is built by Asp43 and Asp82. Residues Asp43–Ser44, Asp82, and Lys110 each bind 3-methyl-2-oxobutanoate. Glu112 lines the Mg(2+) pocket. The active-site Proton acceptor is Glu179.

This sequence belongs to the PanB family. In terms of assembly, homodecamer; pentamer of dimers. Mg(2+) is required as a cofactor.

It localises to the cytoplasm. The enzyme catalyses 3-methyl-2-oxobutanoate + (6R)-5,10-methylene-5,6,7,8-tetrahydrofolate + H2O = 2-dehydropantoate + (6S)-5,6,7,8-tetrahydrofolate. Its pathway is cofactor biosynthesis; (R)-pantothenate biosynthesis; (R)-pantoate from 3-methyl-2-oxobutanoate: step 1/2. In terms of biological role, catalyzes the reversible reaction in which hydroxymethyl group from 5,10-methylenetetrahydrofolate is transferred onto alpha-ketoisovalerate to form ketopantoate. The chain is 3-methyl-2-oxobutanoate hydroxymethyltransferase from Acinetobacter baumannii (strain AB307-0294).